The chain runs to 973 residues: Sodium/calcium exchanger 1 (973 aa).

The signal sequence occupies residues Met1–Ala35. Residues Glu36–Lys74 are Extracellular-facing. N-linked (GlcNAc...) asparagine glycosylation is present at Asn44. The chain crosses the membrane as a helical span at residues Ile75 to Ile95. The Cytoplasmic segment spans residues Ala96 to Asn136. A helical transmembrane segment spans residues Leu137 to Cys157. The Alpha-1 repeat unit spans residues Ala141–Ile181. Residues Gly158–Thr170 lie on the Extracellular side of the membrane. Asn160 is a glycosylation site (N-linked (GlcNAc...) asparagine). The chain crosses the membrane as a helical span at residues Ile171 to Pro191. Residues Asp192–Phe204 are Cytoplasmic-facing. The chain crosses the membrane as a helical span at residues Phe205–Ile225. Residues Ser226 to Glu231 lie on the Extracellular side of the membrane. The chain crosses the membrane as a helical span at residues Val232–Ala252. Topologically, residues Asp253–Gly800 are cytoplasmic. A putative calmodulin-binding region region spans residues Arg254–Gly273. 2 positions are modified to phosphoserine: Ser285 and Ser392. 2 consecutive Calx-beta domains span residues Val396–Ser496 and Ala527–Gly627. Ca(2+)-binding residues include Glu420, Asp456, Asp481, Asp482, Ile484, Glu486, Glu489, Asp533, Asp534, Asp535, Glu551, Asp587, Asp613, Glu614, Glu615, and Glu718. Residues Trp801–Leu821 traverse the membrane as a helical segment. Topologically, residues Ala822–His824 are extracellular. Residues Phe825–Thr845 form a helical membrane-spanning segment. One copy of the Alpha-2 repeat lies at Ala842–Val878. Topologically, residues Ser846–Asn874 are cytoplasmic. A helical transmembrane segment spans residues Ala875–Ala895. The Extracellular portion of the chain corresponds to Asn896–Thr906. Residues Leu907–Tyr927 form a helical membrane-spanning segment. The Cytoplasmic portion of the chain corresponds to Arg928–Lys944. A helical transmembrane segment spans residues Leu945–Glu965. At Ala966–Phe973 the chain is on the extracellular side.

Belongs to the Ca(2+):cation antiporter (CaCA) (TC 2.A.19) family. SLC8 subfamily. In terms of tissue distribution, detected primarily in heart and at lower levels in brain. Expressed in cardiac sarcolemma, brain, kidney, liver, pancreas, skeletal muscle, placenta and lung.

The protein localises to the cell membrane. It catalyses the reaction Ca(2+)(in) + 3 Na(+)(out) = Ca(2+)(out) + 3 Na(+)(in). Activated by micromolar levels of Ca(2+). Its function is as follows. Mediates the exchange of one Ca(2+) ion against three to four Na(+) ions across the cell membrane, and thereby contributes to the regulation of cytoplasmic Ca(2+) levels and Ca(2+)-dependent cellular processes. Contributes to Ca(2+) transport during excitation-contraction coupling in muscle. In a first phase, voltage-gated channels mediate the rapid increase of cytoplasmic Ca(2+) levels due to release of Ca(2+) stores from the endoplasmic reticulum. SLC8A1 mediates the export of Ca(2+) from the cell during the next phase, so that cytoplasmic Ca(2+) levels rapidly return to baseline. Required for normal embryonic heart development and the onset of heart contractions. This chain is Sodium/calcium exchanger 1 (SLC8A1), found in Homo sapiens (Human).